A 495-amino-acid polypeptide reads, in one-letter code: Cytochrome P450 monooxygenase 64 (495 aa).

Residues 2-22 (FLQIVTSVLATGLLYALISVL) form a helical membrane-spanning segment. Residues Asn-25 and Asn-198 are each glycosylated (N-linked (GlcNAc...) asparagine). Cys-428 is a binding site for heme.

The protein belongs to the cytochrome P450 family. Heme serves as cofactor.

It is found in the membrane. It participates in secondary metabolite biosynthesis. Cytochrome P450 monooxygenase that is able to use 4-ethoxybenzoic acid as a substrate for oxidation. This chain is Cytochrome P450 monooxygenase 64, found in Postia placenta (strain ATCC 44394 / Madison 698-R) (Brown rot fungus).